The sequence spans 480 residues: Glucosylglycerol phosphorylase (480 aa).

D190 serves as the catalytic Nucleophile. Substrate is bound at residue Y194. Residue E231 is the Proton donor of the active site. Residue Q336 coordinates substrate.

This sequence belongs to the glycosyl hydrolase 13 family. Sucrose phosphorylase subfamily.

The catalysed reaction is 2-O-(alpha-D-glucopyranosyl)glycerol + phosphate = alpha-D-glucose 1-phosphate + glycerol. Functionally, catalyzes the reversible phosphorolysis of 2-O-alpha-D-glucosylglycerol with retention of the anomeric configuration, forming alpha-D-glucose 1-phosphate and glycerol. Has most likely a catabolic role, either regulating the intracellular levels of glucosylglycerol, which acts as a compatible solute, or degrading it when the environmental conditions change. Cannot catalyze the phosphorolysis of sucrose or glucosylglycerate. The chain is Glucosylglycerol phosphorylase from Marinobacter adhaerens (strain DSM 23420 / HP15).